The chain runs to 418 residues: MNIFEELKARGLVFQTTDEQALVKALTEGQVSYYTGYDPTADSLHLGHLVAILTSRRLQLAGHKPYALVGGATGLIGDPSFKDAERSLQTKETVLEWSDKIKGQLSTFLDFENGDNKAELVNNYDWFSQISFIDFLRDVGKYFTVNYMMSKDSVKKRIETGISYTEFAYQIMQGYDFYELNDKHNVTLQIGGSDQWGNMTAGTELLRKKADKTGHVMTVPLITDSTGKKFGKSEGNAVWLDADKTSPYEMYQFWLNVMDDDAVRFLKIFTFLSLDEIAEIETQFNAARHERLAQKTLAREVVTLVHGEEAYKQALNITEQLFAGNIKNLSANELKQGLSNVPNYHVQSEDSLNLVDMLVTAGISPSKRQAREDVQNGAIYINGDRVQDLDYQLSNDDKIDDQLTVIRRGKKKYAVLTY.

An L-tyrosine-binding site is contributed by Tyr34. Positions 39-48 match the 'HIGH' region motif; that stretch reads PTADSLHLGH. 2 residues coordinate L-tyrosine: Tyr169 and Gln173. The 'KMSKS' region signature appears at 229–233; the sequence is KFGKS. Residue Lys232 participates in ATP binding. In terms of domain architecture, S4 RNA-binding spans 352–418; the sequence is LNLVDMLVTA…GKKKYAVLTY (67 aa).

Belongs to the class-I aminoacyl-tRNA synthetase family. TyrS type 1 subfamily. In terms of assembly, homodimer.

The protein localises to the cytoplasm. It catalyses the reaction tRNA(Tyr) + L-tyrosine + ATP = L-tyrosyl-tRNA(Tyr) + AMP + diphosphate + H(+). Functionally, catalyzes the attachment of tyrosine to tRNA(Tyr) in a two-step reaction: tyrosine is first activated by ATP to form Tyr-AMP and then transferred to the acceptor end of tRNA(Tyr). This Streptococcus pyogenes serotype M12 (strain MGAS2096) protein is Tyrosine--tRNA ligase.